The primary structure comprises 132 residues: Precursor of CEP10 (132 aa).

Positions 1-19 are cleaved as a signal peptide; it reads MKLFIIIVVTSLTISKVFD. Positions 20–66 are excised as a propeptide; the sequence is KTLVTIEARNLRKMDRHEHFNANEDFVEAKMLKKIDNKNNLNNRCIN. A hydroxyproline mark is found at proline 70 and proline 73. Positions 82–91 are excised as a propeptide; sequence PKVINNKFTK. Hydroxyproline is present on residues proline 95, proline 98, and proline 102. Positions 107–116 are excised as a propeptide; that stretch reads LRVVNNKFTN. A hydroxyproline mark is found at proline 120, proline 123, and proline 127. A propeptide is located at residue proline 132.

Belongs to the C-terminally encoded plant signaling peptide (CEP) family. As to quaternary structure, interacts with CEP receptors (e.g. CEPR1 and CEPR2). The mature small signaling peptide is generated by proteolytic processing of the longer precursor.

The protein resides in the secreted. It localises to the extracellular space. It is found in the apoplast. Extracellular signaling peptide that may regulate primary root growth rate and systemic nitrogen (N)-demand signaling. This chain is Precursor of CEP10, found in Arabidopsis thaliana (Mouse-ear cress).